The primary structure comprises 160 residues: uncharacterized protein (160 aa).

A signal peptide spans 1 to 23; it reads MSIPHSVFSALLVFVALATTTLA. Residues 24–132 are Cytoplasmic-facing; sequence STEACLPTNK…DPNTAYWSSD (109 aa). A helical membrane pass occupies residues 133-155; the sequence is LFGFYTTPTNVTVEMTGYLIWSM. At 156–160 the chain is on the extracellular side; the sequence is GNRRR.

It to yeast protein FLO1.

It is found in the cell membrane. This is an uncharacterized protein from Saccharomyces cerevisiae (strain ATCC 204508 / S288c) (Baker's yeast).